Here is a 156-residue protein sequence, read N- to C-terminus: SCP2 sterol-binding domain-containing protein 1 (156 aa).

Residues 44–156 enclose the SCP2 domain; it reads NFSVFEDISQ…ERIFREWAKI (113 aa).

The polypeptide is SCP2 sterol-binding domain-containing protein 1 (Scp2d1) (Mus musculus (Mouse)).